Consider the following 314-residue polypeptide: 1-aminocyclopropane-1-carboxylate oxidase 1 (314 aa).

The region spanning 153–253 is the Fe2OG dioxygenase domain; sequence PNFGTKVSNY…RMSIASFYNP (101 aa). 3 residues coordinate Fe cation: His-177, Asp-179, and His-234.

It belongs to the iron/ascorbate-dependent oxidoreductase family. As to quaternary structure, monomer. Requires Fe cation as cofactor.

The enzyme catalyses 1-aminocyclopropane-1-carboxylate + L-ascorbate + O2 = ethene + L-dehydroascorbate + hydrogen cyanide + CO2 + 2 H2O. The protein operates within alkene biosynthesis; ethylene biosynthesis via S-adenosyl-L-methionine; ethylene from S-adenosyl-L-methionine: step 2/2. In Malus domestica (Apple), this protein is 1-aminocyclopropane-1-carboxylate oxidase 1.